Consider the following 240-residue polypeptide: Proteasome subunit beta type-1 (240 aa).

Methionine 1 carries the post-translational modification N-acetylmethionine. The propeptide occupies 1 to 27; sequence MLSTAAYRDPDRELVMGPQGSAGPVQM. Serine 57 is a glycosylation site (O-linked (GlcNAc) serine). Phosphoserine is present on residues serine 61 and serine 67. Tyrosine 149 carries the phosphotyrosine modification. A Phosphoserine modification is found at serine 161. An N6-acetyllysine modification is found at lysine 203. Serine 208 is a glycosylation site (O-linked (GlcNAc) serine).

The protein belongs to the peptidase T1B family. As to quaternary structure, the 26S proteasome consists of a 20S proteasome core and two 19S regulatory subunits. The 20S proteasome core is a barrel-shaped complex made of 28 subunits that are arranged in four stacked rings. The two outer rings are each formed by seven alpha subunits, and the two inner rings are formed by seven beta subunits. The proteolytic activity is exerted by three beta-subunits PSMB5, PSMB6 and PSMB7. Interacts with SERPINB2. Interacts with RFPL4A. As to expression, ubiquitous.

Its subcellular location is the cytoplasm. It is found in the nucleus. In terms of biological role, non-catalytic component of the 20S core proteasome complex involved in the proteolytic degradation of most intracellular proteins. This complex plays numerous essential roles within the cell by associating with different regulatory particles. Associated with two 19S regulatory particles, forms the 26S proteasome and thus participates in the ATP-dependent degradation of ubiquitinated proteins. The 26S proteasome plays a key role in the maintenance of protein homeostasis by removing misfolded or damaged proteins that could impair cellular functions, and by removing proteins whose functions are no longer required. Associated with the PA200 or PA28, the 20S proteasome mediates ubiquitin-independent protein degradation. This type of proteolysis is required in several pathways including spermatogenesis (20S-PA200 complex) or generation of a subset of MHC class I-presented antigenic peptides (20S-PA28 complex). This is Proteasome subunit beta type-1 (Psmb1) from Rattus norvegicus (Rat).